The sequence spans 30 residues: Phospholipase A2 acanmyotoxin-2 (30 aa).

Ca(2+) is bound by residues Tyr-28 and Gly-30.

Ca(2+) serves as cofactor. Contains seven disulfide bonds. In terms of tissue distribution, expressed by the venom gland.

Its subcellular location is the secreted. The enzyme catalyses a 1,2-diacyl-sn-glycero-3-phosphocholine + H2O = a 1-acyl-sn-glycero-3-phosphocholine + a fatty acid + H(+). Its function is as follows. Snake venom phospholipase A2 (PLA2) that has myotoxic activity but no significant neurotoxicity. PLA2 catalyzes the calcium-dependent hydrolysis of the 2-acyl groups in 3-sn-phosphoglycerides. In Acanthophis sp. (strain Seram) (Seram death adder), this protein is Phospholipase A2 acanmyotoxin-2.